Here is a 368-residue protein sequence, read N- to C-terminus: Molybdenum import ATP-binding protein ModC (368 aa).

Positions 1 to 230 constitute an ABC transporter domain; sequence MTIKIQFKQT…HAMRPWQSFS (230 aa). 32–39 contacts ATP; it reads GRSGAGKT. One can recognise a Mop domain in the interval 291–362; it reads ATSIRNVLPA…VKGVSVTQRD (72 aa).

The protein belongs to the ABC transporter superfamily. Molybdate importer (TC 3.A.1.8) family. The complex is composed of two ATP-binding proteins (ModC), two transmembrane proteins (ModB) and a solute-binding protein (ModA).

Its subcellular location is the cell inner membrane. The catalysed reaction is molybdate(out) + ATP + H2O = molybdate(in) + ADP + phosphate + H(+). Functionally, part of the ABC transporter complex ModABC involved in molybdenum import. Responsible for energy coupling to the transport system. The sequence is that of Molybdenum import ATP-binding protein ModC from Vibrio parahaemolyticus serotype O3:K6 (strain RIMD 2210633).